Consider the following 61-residue polypeptide: Small ribosomal subunit protein uS14 (61 aa).

Residues cysteine 24, cysteine 27, cysteine 40, and cysteine 43 each contribute to the Zn(2+) site.

The protein belongs to the universal ribosomal protein uS14 family. Zinc-binding uS14 subfamily. In terms of assembly, part of the 30S ribosomal subunit. Contacts proteins S3 and S10. It depends on Zn(2+) as a cofactor.

Binds 16S rRNA, required for the assembly of 30S particles and may also be responsible for determining the conformation of the 16S rRNA at the A site. This is Small ribosomal subunit protein uS14 from Syntrophotalea carbinolica (strain DSM 2380 / NBRC 103641 / GraBd1) (Pelobacter carbinolicus).